Here is a 124-residue protein sequence, read N- to C-terminus: MADCYTELEKAVVVLVENFYKYVSKHSLVKNKISKSSFRKMLQRELNHMLTDTGNRKAADKLIQNLDANHDGRICFDEYWTMIGGITSPMANLIRQQECQQESQQECQQESQQESQQESQQGSS.

One can recognise an EF-hand 1; degenerate domain in the interval 23–37 (VSKHSLVKNKISKSS). Positions 54 to 89 (GNRKAADKLIQNLDANHDGRICFDEYWTMIGGITSP) constitute an EF-hand 2 domain. Asp-67, Asn-69, Asp-71, Arg-73, and Glu-78 together coordinate Ca(2+). Residues 97-124 (QECQQESQQECQQESQQESQQESQQGSS) are disordered.

This sequence belongs to the S-100 family. Homodimer. Interacts with TP53. Ubiquitous. Widely distributed throughout the adult brain and predominantly expressed within specific astrocyte populations. Expressed at high level in adipose tissues of obese animals.

Its subcellular location is the nucleus. It localises to the nucleolus. It is found in the cytoplasm. Its function is as follows. Calcium-binding protein. Binds one calcium ion per monomer. Can promote differentiation of adipocytes (in vitro). Overexpression in 3T3-L1 preadipocytes increases their proliferation, enhances adipogenesis and reduces insulin-stimulated glucose uptake. This chain is Protein S100-A16, found in Mus musculus (Mouse).